A 123-amino-acid polypeptide reads, in one-letter code: Periplasmic [Fe] hydrogenase small subunit (123 aa).

The tat-type signal signal peptide spans 1–34; the sequence is MQIASITRRGFLKVACVTTGAALIGIRMTGKAVA. The segment at 103 to 123 is disordered; sequence TTAGKLPNPRASEFEGPYPYE.

Heterodimer of a large and a small subunit. Post-translationally, predicted to be exported by the Tat system. The position of the signal peptide cleavage has been experimentally proven.

The protein localises to the periplasm. The catalysed reaction is H2 + 2 oxidized [2Fe-2S]-[ferredoxin] = 2 reduced [2Fe-2S]-[ferredoxin] + 2 H(+). Functionally, may be involved in hydrogen uptake for the reduction of sulfate to hydrogen sulfide in an electron transport chain. Cytochrome c3 is likely to be the physiological electron carrier for the enzyme. This is Periplasmic [Fe] hydrogenase small subunit (hydB) from Nitratidesulfovibrio vulgaris (strain ATCC 29579 / DSM 644 / CCUG 34227 / NCIMB 8303 / VKM B-1760 / Hildenborough) (Desulfovibrio vulgaris).